A 41-amino-acid chain; its full sequence is MKDFTTYLSTAPVVAAAWFTFTAGLLIEINRFFPDPLAFSF.

The helical transmembrane segment at 7-27 (YLSTAPVVAAAWFTFTAGLLI) threads the bilayer.

It belongs to the PsaJ family.

It localises to the plastid. The protein resides in the chloroplast thylakoid membrane. Functionally, may help in the organization of the PsaE and PsaF subunits. The protein is Photosystem I reaction center subunit IX of Oltmannsiellopsis viridis (Marine flagellate).